The primary structure comprises 622 residues: Deoxynucleoside triphosphate triphosphohydrolase SAMHD1 (622 aa).

Positions 26–89 (WDVEDTVAYL…LHCLQKLSQI (64 aa)) constitute an SAM domain. The GTP site is built by K95 and V96. N98 is a dGTP binding site. Positions 116, 121, and 124 each coordinate GTP. DGTP is bound by residues Q128, L129, V135, and R143. Q128 serves as a coordination point for dATP. Q128 lines the dCTP pocket. A dTTP-binding site is contributed by Q128. R143 lines the dATP pocket. R143 provides a ligand contact to dCTP. R143 serves as a coordination point for dTTP. The HD domain maps to 143-296 (RFEHSIGVGY…GIDVDKWDYF (154 aa)). H146, H185, and D186 together coordinate Mn(2+). Residues H189 and H194 each coordinate dATP. Residues H189 and H194 each contribute to the dCTP site. 2 residues coordinate dTTP: H189 and H194. H212 is an active-site residue. Residue D291 participates in Mn(2+) binding. Residues K292, Y295, D299, R313, R332, K334, N338, R346, Y354, Q355, H356, and K357 each coordinate dGTP. 3 residues coordinate dATP: K292, Y295, and D299. The dCTP site is built by K292, Y295, and D299. DTTP-binding residues include K292, Y295, and D299. A dATP-binding site is contributed by R346. DCTP is bound at residue R346. Q355 serves as a coordination point for dATP. Residue Q355 participates in dCTP binding. Q355 contributes to the dTTP binding site. Residues R431, K435, and K502 each contribute to the GTP site. K502 contributes to the dGTP binding site. The tract at residues 571–622 (TPLKQDWHAREDEDEEEEEKHRQNQTLPHHTPQRTGRNVKVDLFQARGETKL) is disordered. Residues 594-606 (NQTLPHHTPQRTG) show a composition bias toward polar residues.

It belongs to the SAMHD1 family. Homodimer; in absence of GTP and dNTP. Homotetramer; in GTP- and dNTP-bound form. Interacts with rbbp8/CtIP. It depends on Zn(2+) as a cofactor.

Its subcellular location is the nucleus. The protein localises to the chromosome. The catalysed reaction is a 2'-deoxyribonucleoside 5'-triphosphate + H2O = a 2'-deoxyribonucleoside + triphosphate + H(+). The enzyme catalyses dATP + H2O = 2'-deoxyadenosine + triphosphate + H(+). It catalyses the reaction dCTP + H2O = 2'-deoxycytidine + triphosphate + H(+). It carries out the reaction dGTP + H2O = 2'-deoxyguanosine + triphosphate + H(+). The catalysed reaction is dTTP + H2O = thymidine + triphosphate + H(+). Allosterically activated and regulated via the combined actions of GTP and dNTPs (dATP, dGTP, dTTP and dCTP): Allosteric site 1 binds GTP, while allosteric site 2 binds dNTP. Allosteric activation promotes the formation of highly active homotetramers. In terms of biological role, protein that acts both as a host restriction factor involved in defense response to virus and as a regulator of DNA end resection at stalled replication forks. Has deoxynucleoside triphosphate (dNTPase) activity, which is required to restrict infection by viruses: dNTPase activity reduces cellular dNTP levels to levels too low for retroviral reverse transcription to occur, blocking early-stage virus replication in dendritic and other myeloid cells. Functions during S phase at stalled DNA replication forks to promote the resection of gapped or reversed forks: acts by stimulating the exonuclease activity of MRE11, activating the ATR-CHK1 pathway and allowing the forks to restart replication. Its ability to promote degradation of nascent DNA at stalled replication forks is required to prevent induction of type I interferons, thereby preventing chronic inflammation. Ability to promote DNA end resection at stalled replication forks is independent of dNTPase activity. The chain is Deoxynucleoside triphosphate triphosphohydrolase SAMHD1 from Danio rerio (Zebrafish).